The primary structure comprises 436 residues: Proteasome-activating nucleotidase (436 aa).

Positions 7–98 (KDVRDLCEKF…LRSDLQRMKK (92 aa)) form a coiled coil. ATP is bound by residues 223 to 228 (GTGKTL) and His362. Residues 434–436 (AYH) are docks into pockets in the proteasome alpha-ring to cause gate opening.

This sequence belongs to the AAA ATPase family. Homohexamer. The hexameric complex has a two-ring architecture resembling a top hat that caps the 20S proteasome core at one or both ends. Upon ATP-binding, the C-terminus of PAN interacts with the alpha-rings of the proteasome core by binding to the intersubunit pockets.

It is found in the cytoplasm. Its function is as follows. ATPase which is responsible for recognizing, binding, unfolding and translocation of substrate proteins into the archaeal 20S proteasome core particle. Is essential for opening the gate of the 20S proteasome via an interaction with its C-terminus, thereby allowing substrate entry and access to the site of proteolysis. Thus, the C-termini of the proteasomal ATPase function like a 'key in a lock' to induce gate opening and therefore regulate proteolysis. Unfolding activity requires energy from ATP hydrolysis, whereas ATP binding alone promotes ATPase-20S proteasome association which triggers gate opening, and supports translocation of unfolded substrates. This Methanopyrus kandleri (strain AV19 / DSM 6324 / JCM 9639 / NBRC 100938) protein is Proteasome-activating nucleotidase.